The chain runs to 91 residues: MEKQCSKFIVSGHVQGVGFCYHTSHQGLKLGLTGYAKNLNNGDVEVVACGTPERLEELYLWLQEGPKTASVRQVRRLSSELEHDYQGFEIL.

Residues 5–91 form the Acylphosphatase-like domain; the sequence is CSKFIVSGHV…EHDYQGFEIL (87 aa). N38 is a catalytic residue.

Belongs to the acylphosphatase family.

The enzyme catalyses an acyl phosphate + H2O = a carboxylate + phosphate + H(+). The chain is Acylphosphatase (acyP) from Vibrio cholerae serotype O1 (strain ATCC 39541 / Classical Ogawa 395 / O395).